Reading from the N-terminus, the 328-residue chain is Thiamine thiazole synthase (328 aa).

Residues Ala87, 108–109 (EA), Gly116, and Val181 each bind substrate. A 2,3-didehydroalanine (Cys) modification is found at Cys215. Substrate-binding positions include Asp217, His232, Met284, and 294 to 296 (RMG).

Belongs to the THI4 family. Homooctamer. Fe cation is required as a cofactor. During the catalytic reaction, a sulfide is transferred from Cys-215 to a reaction intermediate, generating a dehydroalanine residue.

Its subcellular location is the cytoplasm. The protein localises to the nucleus. It carries out the reaction [ADP-thiazole synthase]-L-cysteine + glycine + NAD(+) = [ADP-thiazole synthase]-dehydroalanine + ADP-5-ethyl-4-methylthiazole-2-carboxylate + nicotinamide + 3 H2O + 2 H(+). In terms of biological role, involved in biosynthesis of the thiamine precursor thiazole. Catalyzes the conversion of NAD and glycine to adenosine diphosphate 5-(2-hydroxyethyl)-4-methylthiazole-2-carboxylic acid (ADT), an adenylated thiazole intermediate. The reaction includes an iron-dependent sulfide transfer from a conserved cysteine residue of the protein to a thiazole intermediate. The enzyme can only undergo a single turnover, which suggests it is a suicide enzyme. May have additional roles in adaptation to various stress conditions and in DNA damage tolerance. This chain is Thiamine thiazole synthase (thi2), found in Schizosaccharomyces pombe (strain 972 / ATCC 24843) (Fission yeast).